Here is a 637-residue protein sequence, read N- to C-terminus: ATP-dependent RNA helicase DBP6 (637 aa).

The disordered stretch occupies residues 1 to 93; that stretch reads MFAVRFDPSQ…AASDHPDKHN (93 aa). Positions 33 to 84 are enriched in acidic residues; sequence DEEDESSEEETESSEDEEEKEKEEVADEDSMDVDDESSGDDDEEAEEGEVDA. A Q motif motif is present at residues 198–206; that stretch reads TFPIQSILL. The 181-residue stretch at 222–402 folds into the Helicase ATP-binding domain; it reads KNFTRRVGDV…GLQFYNPKLF (181 aa). 235–242 is an ATP binding site; that stretch reads ASTGSGKT. Positions 342–345 match the DEAD box motif; the sequence is DEAD. The Helicase C-terminal domain maps to 434–608; sequence FLLRLLSEIN…EGQEEEAQVL (175 aa).

Belongs to the DEAD box helicase family. DDX51/DBP6 subfamily. Associated with pre-ribosomal particles.

The protein localises to the nucleus. Its subcellular location is the nucleolus. The catalysed reaction is ATP + H2O = ADP + phosphate + H(+). Its function is as follows. ATP-binding RNA helicase involved in the biogenesis of 60S ribosomal subunits and is required for the normal formation of 25S and 5.8S rRNAs. This Vanderwaltozyma polyspora (strain ATCC 22028 / DSM 70294 / BCRC 21397 / CBS 2163 / NBRC 10782 / NRRL Y-8283 / UCD 57-17) (Kluyveromyces polysporus) protein is ATP-dependent RNA helicase DBP6 (DBP6).